The chain runs to 206 residues: Small ribosomal subunit protein uS4 (206 aa).

The 61-residue stretch at 96 to 156 folds into the S4 RNA-binding domain; it reads GRLDNVVYRM…EKSKKQARIK (61 aa).

It belongs to the universal ribosomal protein uS4 family. As to quaternary structure, part of the 30S ribosomal subunit. Contacts protein S5. The interaction surface between S4 and S5 is involved in control of translational fidelity.

In terms of biological role, one of the primary rRNA binding proteins, it binds directly to 16S rRNA where it nucleates assembly of the body of the 30S subunit. With S5 and S12 plays an important role in translational accuracy. This chain is Small ribosomal subunit protein uS4, found in Mannheimia succiniciproducens (strain KCTC 0769BP / MBEL55E).